The sequence spans 530 residues: Putative sulfate transporter YvdB (530 aa).

Helical transmembrane passes span 19 to 39 (LIAGIVVGVVAIPLGMAFAIA), 41 to 61 (GVEPEYGLYTVVIAGICISLF), 68 to 88 (IGGPTGAFVPILFGIIMQYGL), 91 to 111 (LLIAGFMAGVMLVLFGLFKLG), 121 to 141 (VIVGFTAGIAVLIFTEQIANF), 164 to 184 (LGTFNVYAILTAVIGLVILLV), 192 to 212 (VPGALLALLISTVVAVVFFPD), 241 to 261 (MVMLFPAALVIALLGGLESIL), 313 to 333 (AVSPVSGVVHGVVVLLVLLVF), and 384 to 404 (VLFDLIIGVATGLLLAFVFFI). The STAS domain occupies 420 to 530 (PVLAKREDPS…FFDHHDEITG (111 aa)).

The protein belongs to the SLC26A/SulP transporter (TC 2.A.53) family.

Its subcellular location is the cell membrane. This chain is Putative sulfate transporter YvdB (yvdB), found in Bacillus subtilis (strain 168).